Consider the following 261-residue polypeptide: 3-methyl-2-oxobutanoate hydroxymethyltransferase (261 aa).

Asp-42 and Asp-81 together coordinate Mg(2+). 3-methyl-2-oxobutanoate is bound by residues 42–43 (DS), Asp-81, and Lys-110. Glu-112 lines the Mg(2+) pocket. Catalysis depends on Glu-179, which acts as the Proton acceptor.

It belongs to the PanB family. As to quaternary structure, homodecamer; pentamer of dimers. Mg(2+) serves as cofactor.

The protein resides in the cytoplasm. The catalysed reaction is 3-methyl-2-oxobutanoate + (6R)-5,10-methylene-5,6,7,8-tetrahydrofolate + H2O = 2-dehydropantoate + (6S)-5,6,7,8-tetrahydrofolate. It participates in cofactor biosynthesis; (R)-pantothenate biosynthesis; (R)-pantoate from 3-methyl-2-oxobutanoate: step 1/2. Catalyzes the reversible reaction in which hydroxymethyl group from 5,10-methylenetetrahydrofolate is transferred onto alpha-ketoisovalerate to form ketopantoate. The protein is 3-methyl-2-oxobutanoate hydroxymethyltransferase of Thermus thermophilus (strain ATCC BAA-163 / DSM 7039 / HB27).